Here is a 281-residue protein sequence, read N- to C-terminus: uncharacterized protein (281 aa).

Residues 5–27 (AYVTVIYGNNIYLTGALVLGYTL) form a helical membrane-spanning segment.

It localises to the membrane. This is an uncharacterized protein from Acanthamoeba polyphaga mimivirus (APMV).